We begin with the raw amino-acid sequence, 231 residues long: Large ribosomal subunit protein uL1 (231 aa).

Belongs to the universal ribosomal protein uL1 family. Part of the 50S ribosomal subunit.

Binds directly to 23S rRNA. The L1 stalk is quite mobile in the ribosome, and is involved in E site tRNA release. In terms of biological role, protein L1 is also a translational repressor protein, it controls the translation of the L11 operon by binding to its mRNA. This Thiobacillus denitrificans (strain ATCC 25259 / T1) protein is Large ribosomal subunit protein uL1.